The following is a 131-amino-acid chain: UPF0102 protein YraN (131 aa).

Residues 1–19 are compositionally biased toward polar residues; sequence MATVPTRSGSPRQLTTKQT. Residues 1 to 21 form a disordered region; it reads MATVPTRSGSPRQLTTKQTGD.

This sequence belongs to the UPF0102 family.

The protein is UPF0102 protein YraN of Shigella flexneri serotype 5b (strain 8401).